The following is a 445-amino-acid chain: MKTPKNDVYTVSRLNGEVRQLLEGQLGRIWLNAEISNFAAPGSGHWYLTLKDNFSQIRCAMFKGRNQAVTFRPANGQQVLVKGNISVYEPRGDYQLLIESMLPAGDGLLAQQYEALKMKLAAEGLFASDTKRPLPANIQKIGVVTSPTGAAIRDILHVLARRDSSIEVIIYPTPVQGSDAAKSICDAINLANSRAEVDVLLVTRGGGSLEDLWSFNDEGLAHTIYNSGIPVVSAVGHEVDMTISDYVADLRAPTPSAGAELLSKDADNKAQKLLSQLSRLKQAWQHYQLKKQSQVQTIEHRLQKQDPQRRLQMYEQSFDEMQLRLQQAMQTKLHAYALKQQNLSSRLANQSPQHRLTLEAQRLSYLSAKLNDAMDDKLKMSEQRLAHRAQQLDTVSPLATLSRGYSITLTGSGKVVQAPSDTCVGDTLTTRLRDGSVTSTVVEVS.

Belongs to the XseA family. As to quaternary structure, heterooligomer composed of large and small subunits.

The protein localises to the cytoplasm. It carries out the reaction Exonucleolytic cleavage in either 5'- to 3'- or 3'- to 5'-direction to yield nucleoside 5'-phosphates.. Its function is as follows. Bidirectionally degrades single-stranded DNA into large acid-insoluble oligonucleotides, which are then degraded further into small acid-soluble oligonucleotides. The polypeptide is Exodeoxyribonuclease 7 large subunit (Shewanella pealeana (strain ATCC 700345 / ANG-SQ1)).